Reading from the N-terminus, the 336-residue chain is Anthranilate phosphoribosyltransferase (336 aa).

Residues glycine 79, 82 to 83 (GD), threonine 87, 89 to 92 (NIST), 107 to 115 (KHGNRAMSS), and serine 119 each bind 5-phospho-alpha-D-ribose 1-diphosphate. Position 79 (glycine 79) interacts with anthranilate. Residue serine 91 coordinates Mg(2+). Residue asparagine 110 coordinates anthranilate. Residue arginine 165 coordinates anthranilate. Aspartate 225 and glutamate 226 together coordinate Mg(2+).

It belongs to the anthranilate phosphoribosyltransferase family. As to quaternary structure, homodimer. Mg(2+) is required as a cofactor.

It catalyses the reaction N-(5-phospho-beta-D-ribosyl)anthranilate + diphosphate = 5-phospho-alpha-D-ribose 1-diphosphate + anthranilate. It participates in amino-acid biosynthesis; L-tryptophan biosynthesis; L-tryptophan from chorismate: step 2/5. In terms of biological role, catalyzes the transfer of the phosphoribosyl group of 5-phosphorylribose-1-pyrophosphate (PRPP) to anthranilate to yield N-(5'-phosphoribosyl)-anthranilate (PRA). The protein is Anthranilate phosphoribosyltransferase of Dictyoglomus thermophilum (strain ATCC 35947 / DSM 3960 / H-6-12).